The chain runs to 111 residues: Beta-2-microglobulin (111 aa).

The first 17 residues, 1–17 (MRALILLSLGLLRVAVP), serve as a signal peptide directing secretion. Residues 20–111 (PQVVVYTYKP…KTSIYKLESF (92 aa)) form the Ig-like C1-type domain.

Belongs to the beta-2-microglobulin family. As to quaternary structure, heterodimer of an alpha chain and a beta chain. Beta-2-microglobulin is the beta-chain of major histocompatibility complex class I molecules.

It localises to the secreted. Its function is as follows. Component of the class I major histocompatibility complex (MHC). Involved in the presentation of peptide antigens to the immune system. This chain is Beta-2-microglobulin (b2m), found in Rostroraja eglanteria (Clearnose skate).